A 305-amino-acid polypeptide reads, in one-letter code: 2-aminophenol 1,6-dioxygenase beta subunit (305 aa).

Fe cation-binding residues include His14, His63, and His196.

This sequence belongs to the LigB/MhpB extradiol dioxygenase family. As to quaternary structure, heterotetramer of 2 alpha and 2 beta subunits. It depends on Fe(2+) as a cofactor.

It catalyses the reaction 2-aminophenol + O2 = 2-aminomuconate 6-semialdehyde. With respect to regulation, strongly inhibited by CuSO(4), FeCl(3), K(3)[Fe(CN)(6)], AgNO3, HgCl(2) and MnCl(2). Component of the 2-aminophenol 1,6-dioxygenase complex that catalyzes the ring fission of 2-aminophenol to produce 2-aminomuconic 6-semialdehyde. AmnB seems to be the catalytic subunit of the complex. The enzyme is also active toward 2-amino-p-cresol, 6-amino-m-cresol, 2-amino-m-cresol, 2-amino-4,5-dimethylphenol, 2-amino-4-chlorophenol, and catechol. The protein is 2-aminophenol 1,6-dioxygenase beta subunit (amnB) of Pseudomonas sp.